A 314-amino-acid chain; its full sequence is Homoserine O-acetyltransferase (314 aa).

The active-site Acyl-thioester intermediate is the C142. Positions 163 and 192 each coordinate substrate. Catalysis depends on H235, which acts as the Proton acceptor. E237 is a catalytic residue. R249 is a substrate binding site.

It belongs to the MetA family.

The protein localises to the cytoplasm. It carries out the reaction L-homoserine + acetyl-CoA = O-acetyl-L-homoserine + CoA. Its pathway is amino-acid biosynthesis; L-methionine biosynthesis via de novo pathway; O-acetyl-L-homoserine from L-homoserine: step 1/1. Functionally, transfers an acetyl group from acetyl-CoA to L-homoserine, forming acetyl-L-homoserine. This is Homoserine O-acetyltransferase from Desulfovibrio desulfuricans (strain ATCC 27774 / DSM 6949 / MB).